The following is a 380-amino-acid chain: Probable transposase for insertion sequence element IS701 (380 aa).

Its function is as follows. Involved in the transposition of the insertion sequence. This Microchaete diplosiphon (Fremyella diplosiphon) protein is Probable transposase for insertion sequence element IS701.